We begin with the raw amino-acid sequence, 352 residues long: DNA integrity scanning protein DisA (352 aa).

The region spanning 3–143 (DERIVLALKS…FKYSLSEVSV (141 aa)) is the DAC domain. ATP is bound by residues Gly-70, Leu-88, and 101–105 (IRHRT).

This sequence belongs to the DisA family. In terms of assembly, homooctamer. Mg(2+) serves as cofactor.

It carries out the reaction 2 ATP = 3',3'-c-di-AMP + 2 diphosphate. Functionally, participates in a DNA-damage check-point that is active prior to asymmetric division when DNA is damaged. DisA forms globular foci that rapidly scan along the chromosomes during sporulation, searching for lesions. When a lesion is present, DisA pauses at the lesion site. This triggers a cellular response that culminates in a temporary block in sporulation initiation. In terms of biological role, also has diadenylate cyclase activity, catalyzing the condensation of 2 ATP molecules into cyclic di-AMP (c-di-AMP). c-di-AMP acts as a signaling molecule that couples DNA integrity with progression of sporulation. The rise in c-di-AMP level generated by DisA while scanning the chromosome, operates as a positive signal that advances sporulation; upon encountering a lesion, the DisA focus arrests at the damaged site and halts c-di-AMP synthesis. This chain is DNA integrity scanning protein DisA, found in Carboxydothermus hydrogenoformans (strain ATCC BAA-161 / DSM 6008 / Z-2901).